A 345-amino-acid chain; its full sequence is MIKNAIKKVVSGQHLSEEEAGAVMEQIMEGGASPAQIASLLTAMRLKGETVDEITGFARVMRQKSTRVKSKHPVLVDTCGTGGDGAGTFNISTAAAFVVAGAGVPVAKHGNRSVSSRCGSADVLEELGVRVDLDREAVEECLNMVGMAFLFAPLLHRSMGYVAGPRREIGIRTVFNILGPLTNPAGANAQVLGVYSPFLAEMLAKVLARLGVSRAFVVHGAGGLDEISLAGPSILCEVRNGSVRRGLLDPARFGFRYAPVSVLAGGTPRENAAIALKILEGERGARRDVVVLNAALGLVAGGKARNIAEGLEIAALSIDSGLAVAKLRELVEFTGNLSCGEAAVR.

Residues Gly-80, 83 to 84 (GD), Thr-88, 90 to 93 (NIST), 108 to 116 (KHGNRSVSS), and Ser-120 each bind 5-phospho-alpha-D-ribose 1-diphosphate. Gly-80 is a binding site for anthranilate. Ser-92 contributes to the Mg(2+) binding site. An anthranilate-binding site is contributed by Asn-111. Arg-166 contributes to the anthranilate binding site. Residues Asp-225 and Glu-226 each contribute to the Mg(2+) site.

Belongs to the anthranilate phosphoribosyltransferase family. Homodimer. The cofactor is Mg(2+).

It catalyses the reaction N-(5-phospho-beta-D-ribosyl)anthranilate + diphosphate = 5-phospho-alpha-D-ribose 1-diphosphate + anthranilate. It functions in the pathway amino-acid biosynthesis; L-tryptophan biosynthesis; L-tryptophan from chorismate: step 2/5. Its function is as follows. Catalyzes the transfer of the phosphoribosyl group of 5-phosphorylribose-1-pyrophosphate (PRPP) to anthranilate to yield N-(5'-phosphoribosyl)-anthranilate (PRA). This chain is Anthranilate phosphoribosyltransferase, found in Pelotomaculum thermopropionicum (strain DSM 13744 / JCM 10971 / SI).